Here is a 1067-residue protein sequence, read N- to C-terminus: Carbamoyl phosphate synthase large chain (1067 aa).

A carboxyphosphate synthetic domain region spans residues methionine 1–glutamate 401. ATP-binding residues include arginine 129, arginine 169, glycine 175, glycine 176, lysine 208, valine 210, glutamate 215, glycine 241, isoleucine 242, histidine 243, glutamine 284, and glutamate 298. Residues arginine 133–leucine 327 form the ATP-grasp 1 domain. Positions 284, 298, and 300 each coordinate Mg(2+). Positions 284, 298, and 300 each coordinate Mn(2+). An oligomerization domain region spans residues isoleucine 402–valine 549. Residues valine 550–serine 932 are carbamoyl phosphate synthetic domain. In terms of domain architecture, ATP-grasp 2 spans aspartate 674–leucine 864. The ATP site is built by arginine 710, lysine 749, leucine 751, glutamate 755, glycine 780, valine 781, histidine 782, serine 783, glutamine 823, and glutamate 835. Mg(2+) contacts are provided by glutamine 823, glutamate 835, and asparagine 837. Residues glutamine 823, glutamate 835, and asparagine 837 each contribute to the Mn(2+) site. Residues methionine 933–isoleucine 1067 form the MGS-like domain. The interval methionine 933 to isoleucine 1067 is allosteric domain.

It belongs to the CarB family. In terms of assembly, composed of two chains; the small (or glutamine) chain promotes the hydrolysis of glutamine to ammonia, which is used by the large (or ammonia) chain to synthesize carbamoyl phosphate. Tetramer of heterodimers (alpha,beta)4. It depends on Mg(2+) as a cofactor. Requires Mn(2+) as cofactor.

The catalysed reaction is hydrogencarbonate + L-glutamine + 2 ATP + H2O = carbamoyl phosphate + L-glutamate + 2 ADP + phosphate + 2 H(+). It carries out the reaction hydrogencarbonate + NH4(+) + 2 ATP = carbamoyl phosphate + 2 ADP + phosphate + 2 H(+). It functions in the pathway amino-acid biosynthesis; L-arginine biosynthesis; carbamoyl phosphate from bicarbonate: step 1/1. It participates in pyrimidine metabolism; UMP biosynthesis via de novo pathway; (S)-dihydroorotate from bicarbonate: step 1/3. In terms of biological role, large subunit of the glutamine-dependent carbamoyl phosphate synthetase (CPSase). CPSase catalyzes the formation of carbamoyl phosphate from the ammonia moiety of glutamine, carbonate, and phosphate donated by ATP, constituting the first step of 2 biosynthetic pathways, one leading to arginine and/or urea and the other to pyrimidine nucleotides. The large subunit (synthetase) binds the substrates ammonia (free or transferred from glutamine from the small subunit), hydrogencarbonate and ATP and carries out an ATP-coupled ligase reaction, activating hydrogencarbonate by forming carboxy phosphate which reacts with ammonia to form carbamoyl phosphate. This is Carbamoyl phosphate synthase large chain from Clostridium perfringens (strain 13 / Type A).